Here is a 9159-residue protein sequence, read N- to C-terminus: Halomucin (9159 aa).

Positions 1–30 (MSQTAKPIFAVVVALIVLISGVAFIGSVSA) are cleaved as a signal peptide. C-type lectin domains lie at 644 to 776 (TTGN…YLVE) and 929 to 1060 (YDGH…VEYG). Residues 1310-1332 (QPQTVNDPDAVSTRNNNVGSNGL) are compositionally biased toward polar residues. The interval 1310-1351 (QPQTVNDPDAVSTRNNNVGSNGLDSKIEDDQNNGADGNPHGT) is disordered. The tract at residues 1756–3380 (VGGLIGESSG…GFNGEHVGGL (1625 aa)) is V-G-G-L motif-rich region. 8 disordered regions span residues 3484–3514 (GATA…PAPQ), 4878–4912 (ESYW…TTPA), 6570–6589 (TDSA…SSGQ), 7047–7097 (TPTV…GINT), 7660–7702 (ATDS…NPGG), 7888–7923 (IDGD…EPAL), 8212–8237 (STQQ…GAAD), and 8369–8614 (DSTA…GSST). Residues 3495 to 3505 (GTPGGATGYGS) show a composition bias toward gly residues. Positions 4880–4890 (YWDKGATDKSD) are enriched in basic and acidic residues. Polar residues-rich tracts occupy residues 7048–7057 (PTVTINSSSD) and 7068–7078 (GEDSTSSNESS). Acidic residues predominate over residues 7079 to 7092 (DGTESDQGDPEDDI). Positions 7681 to 7698 (VTGSTPTFVSSGTVTTPE) are enriched in polar residues. Residues 7686–7793 (PTFVSSGTVT…ITDVDEQPTG (108 aa)) enclose the Cadherin domain. Acidic residues-rich tracts occupy residues 7888 to 7898 (IDGDGLADDNE) and 7905 to 7920 (DNDD…EDQE). Residues 8378–8390 (ALEDDSSNQDSGD) are compositionally biased toward acidic residues. Composition is skewed to low complexity over residues 8391 to 8529 (DSSN…SSQN) and 8538 to 8548 (SAAAVGAESGS). Composition is skewed to gly residues over residues 8549–8566 (EMGG…GDGS) and 8574–8608 (AGGG…GSSS).

In terms of processing, probably glycosylated with sugar containing sialic acid. This may further contribute to its overall negative charge, thereby creating an aqueous shield covering the cells.

The protein localises to the secreted. Functionally, may protect the organism from desiccation stress. May also contribute to the rigidity and maintenance of the unique square cell morphology of H.walsbyi. The protein is Halomucin (hmu) of Haloquadratum walsbyi (strain DSM 16790 / HBSQ001).